We begin with the raw amino-acid sequence, 181 residues long: TATA-box-binding protein (181 aa).

2 repeat units span residues 7–83 and 98–173.

The protein belongs to the TBP family.

In terms of biological role, general factor that plays a role in the activation of archaeal genes transcribed by RNA polymerase. Binds specifically to the TATA box promoter element which lies close to the position of transcription initiation. The polypeptide is TATA-box-binding protein (Methanococcus vannielii (strain ATCC 35089 / DSM 1224 / JCM 13029 / OCM 148 / SB)).